A 114-amino-acid chain; its full sequence is Large ribosomal subunit protein bL19 (114 aa).

This sequence belongs to the bacterial ribosomal protein bL19 family.

Its function is as follows. This protein is located at the 30S-50S ribosomal subunit interface and may play a role in the structure and function of the aminoacyl-tRNA binding site. The sequence is that of Large ribosomal subunit protein bL19 from Clavibacter michiganensis subsp. michiganensis (strain NCPPB 382).